We begin with the raw amino-acid sequence, 295 residues long: Elongation factor Ts (295 aa).

An involved in Mg(2+) ion dislocation from EF-Tu region spans residues 79-82 (TDFV).

The protein belongs to the EF-Ts family.

The protein localises to the cytoplasm. Functionally, associates with the EF-Tu.GDP complex and induces the exchange of GDP to GTP. It remains bound to the aminoacyl-tRNA.EF-Tu.GTP complex up to the GTP hydrolysis stage on the ribosome. The protein is Elongation factor Ts of Mycoplasma capricolum subsp. capricolum (strain California kid / ATCC 27343 / NCTC 10154).